An 841-amino-acid polypeptide reads, in one-letter code: Axin-1 (841 aa).

Residues 1–78 (MNIQGKGFPL…GYEPEGSASP (78 aa)) form a disordered region. A compositionally biased stretch (polar residues) spans 44-61 (FYSSKSDAVRNETSTATP). One can recognise an RGS domain in the interval 88-211 (SLHSLLDDQD…LKSDIYLEYT (124 aa)). The segment at 217 to 269 (SPKIYSDPSSGSGTGKGLPGYLPTLNEDEEWKCDQDTEPEASRDSAPSSRLTQ) is disordered. Basic and acidic residues predominate over residues 248-259 (KCDQDTEPEASR). An interaction with GSK3B region spans residues 348–433 (LRKQHRREMQ…DADISSGPSV (86 aa)). Residues 434 to 508 (ISHKMPSAQP…RSPESGHLGK (75 aa)) are interaction with beta-catenin. 3 disordered regions span residues 482 to 527 (KTPG…TTKS), 613 to 635 (NIKKTDSGKSDGANYEMPGSPED), and 727 to 756 (RRLEEEEKRAGKLPLKQRLKPQKRPGSGAS). Basic and acidic residues predominate over residues 727-736 (RRLEEEEKRA). In terms of domain architecture, DIX spans 759–841 (CENIVVAYYF…KIIGKVEKID (83 aa)).

Homodimer. Post-translationally, ADP-ribosylated by tankyrase TNKS and TNKS2. Poly-ADP-ribosylated protein is recognized by RNF146, followed by ubiquitination at 'Lys-48' and subsequent activation of the Wnt signaling pathway. In terms of processing, ubiquitinated by RNF146 when poly-ADP-ribosylated, leading to its degradation and subsequent activation of the Wnt signaling pathway.

The protein resides in the cytoplasm. The protein localises to the nucleus. Its subcellular location is the membrane. It localises to the cell membrane. Component of the beta-catenin destruction complex required for regulating CTNNB1 levels through phosphorylation and ubiquitination, and modulating Wnt-signaling. Controls dorsoventral patterning via two opposing effects; down-regulates CTNNB1 to inhibit the Wnt signaling pathway and ventralize embryos, but also dorsalizes embryos by activating a Wnt-independent JNK signaling pathway. This Gallus gallus (Chicken) protein is Axin-1 (AXIN1).